The primary structure comprises 229 residues: HTH-type transcriptional regulator HbdR (229 aa).

The HTH tetR-type domain maps to 20–80; the sequence is EERRHQIISA…LTLKNVLDTY (61 aa). Positions 43-62 form a DNA-binding region, H-T-H motif; it reads TILQIAREAKVSTGLIYQYF.

As to quaternary structure, homodimer in solution.

Its activity is regulated as follows. Activity is regulated by the effector molecules 3-hydroxybenzoyl-CoA and benzoyl-CoA, which bind to HbdR, alleviating its repression on the three target promoters and inducing the expression of the hbd genes. Its function is as follows. Transcriptional regulator that controls the expression of the hbd cluster, which contains three catabolic operons and is responsible for the anaerobic degradation of 3-hydroxybenzoate. HbdR suppresses the activity of the three catabolic promoters (PhbdN, PhbdE and PhbdH) by binding to a conserved palindromic operator box. In addition, it slightly increases activity of its own promoter (PhbdR). The HbdR-mediated repression of hbd genes may play a crucial biological role in maintaining requisite hydroxybenzoate levels in the cell. This chain is HTH-type transcriptional regulator HbdR, found in Aromatoleum sp. (strain CIB) (Azoarcus sp. (strain CIB)).